The following is a 571-amino-acid chain: Proline--tRNA ligase (571 aa).

Belongs to the class-II aminoacyl-tRNA synthetase family. ProS type 1 subfamily. In terms of assembly, homodimer.

Its subcellular location is the cytoplasm. The enzyme catalyses tRNA(Pro) + L-proline + ATP = L-prolyl-tRNA(Pro) + AMP + diphosphate. Functionally, catalyzes the attachment of proline to tRNA(Pro) in a two-step reaction: proline is first activated by ATP to form Pro-AMP and then transferred to the acceptor end of tRNA(Pro). As ProRS can inadvertently accommodate and process non-cognate amino acids such as alanine and cysteine, to avoid such errors it has two additional distinct editing activities against alanine. One activity is designated as 'pretransfer' editing and involves the tRNA(Pro)-independent hydrolysis of activated Ala-AMP. The other activity is designated 'posttransfer' editing and involves deacylation of mischarged Ala-tRNA(Pro). The misacylated Cys-tRNA(Pro) is not edited by ProRS. This Pseudomonas putida (strain W619) protein is Proline--tRNA ligase.